The sequence spans 369 residues: MAASLPLVFTAPKRGMPPRHLADLDSAERKEAVKELGLPAFRADQLARQYYARLEADPEKMTDLPASVREKVGESLFPTLLTPIKHLACDSGDTRKTLWKAHDGTLLESVLMRYPDRATLCISSQAGCGMACPFCATGQGGLDRNLSTAEIVDQVREAAAAMRDGDVAGGPGRLSNVVFMGMGEPLANYKRVVAAVRRITSPAPDGLGLSQRSVTVSTVGLAPAIRKLADEGLSVTLAVSLHTPDDELRDTLVPVNNRWSVSEVLQAARYYADKTGRRVSIEYAMIKNVNDQPWRADMLGKKLKKALGGLVHVNLIPLNPTPGSEWDASPKDVEREFVRRVIAQGVSCTVRDTRGQEIAAACGQLAAEN.

E108 (proton acceptor) is an active-site residue. Residues 114 to 351 (YPDRATLCIS…IAQGVSCTVR (238 aa)) form the Radical SAM core domain. C121 and C362 are joined by a disulfide. [4Fe-4S] cluster contacts are provided by C128, C132, and C135. S-adenosyl-L-methionine is bound by residues 183–184 (GE), S217, 240–242 (SLH), and N319. C362 acts as the S-methylcysteine intermediate in catalysis.

It belongs to the radical SAM superfamily. RlmN family. Requires [4Fe-4S] cluster as cofactor.

The protein resides in the cytoplasm. The enzyme catalyses adenosine(2503) in 23S rRNA + 2 reduced [2Fe-2S]-[ferredoxin] + 2 S-adenosyl-L-methionine = 2-methyladenosine(2503) in 23S rRNA + 5'-deoxyadenosine + L-methionine + 2 oxidized [2Fe-2S]-[ferredoxin] + S-adenosyl-L-homocysteine. It catalyses the reaction adenosine(37) in tRNA + 2 reduced [2Fe-2S]-[ferredoxin] + 2 S-adenosyl-L-methionine = 2-methyladenosine(37) in tRNA + 5'-deoxyadenosine + L-methionine + 2 oxidized [2Fe-2S]-[ferredoxin] + S-adenosyl-L-homocysteine. Its function is as follows. Specifically methylates position 2 of adenine 2503 in 23S rRNA and position 2 of adenine 37 in tRNAs. In Rhodococcus erythropolis (strain PR4 / NBRC 100887), this protein is Probable dual-specificity RNA methyltransferase RlmN.